Here is a 447-residue protein sequence, read N- to C-terminus: Omega-6 fatty acid desaturase, chloroplastic (447 aa).

The transit peptide at M1–A65 directs the protein to the chloroplast. V66 carries the post-translational modification N-acetylvaline. A Histidine box-1 motif is present at residues H171–H175. A Histidine box-2 motif is present at residues H207–H211. Positions H367–H371 match the Histidine box-3 motif.

Belongs to the fatty acid desaturase type 1 family.

The protein resides in the plastid. The protein localises to the chloroplast membrane. It carries out the reaction a (9Z)-octadecenoyl-containing glycerolipid + 2 reduced [2Fe-2S]-[ferredoxin] + O2 + 2 H(+) = a (9Z,12Z)-octadecadienoyl-containing glycerolipid + 2 oxidized [2Fe-2S]-[ferredoxin] + 2 H2O. It functions in the pathway lipid metabolism; polyunsaturated fatty acid biosynthesis. Functionally, chloroplast omega-6 fatty acid desaturase introduces the second double bond in the biosynthesis of 16:3 and 18:3 fatty acids, important constituents of plant membranes. It is thought to use ferredoxin as an electron donor and to act on fatty acids esterified to galactolipids, sulfolipids and phosphatidylglycerol. The protein is Omega-6 fatty acid desaturase, chloroplastic of Spinacia oleracea (Spinach).